A 197-amino-acid polypeptide reads, in one-letter code: Nucleoid occlusion factor SlmA (197 aa).

The HTH tetR-type domain occupies 7–67 (INRREHILQC…GLIEFIEESL (61 aa)). Positions 30–49 (TTAKLASEVGVSEAALYRHF) form a DNA-binding region, H-T-H motif.

Belongs to the nucleoid occlusion factor SlmA family. As to quaternary structure, homodimer. Interacts with FtsZ.

Its subcellular location is the cytoplasm. The protein localises to the nucleoid. In terms of biological role, required for nucleoid occlusion (NO) phenomenon, which prevents Z-ring formation and cell division over the nucleoid. Acts as a DNA-associated cell division inhibitor that binds simultaneously chromosomal DNA and FtsZ, and disrupts the assembly of FtsZ polymers. SlmA-DNA-binding sequences (SBS) are dispersed on non-Ter regions of the chromosome, preventing FtsZ polymerization at these regions. The protein is Nucleoid occlusion factor SlmA of Shewanella oneidensis (strain ATCC 700550 / JCM 31522 / CIP 106686 / LMG 19005 / NCIMB 14063 / MR-1).